Here is a 429-residue protein sequence, read N- to C-terminus: Enolase (429 aa).

Residue Gln-163 participates in (2R)-2-phosphoglycerate binding. Glu-205 serves as the catalytic Proton donor. Residues Asp-242, Glu-286, and Asp-313 each coordinate Mg(2+). (2R)-2-phosphoglycerate-binding residues include Lys-338, Arg-367, Ser-368, and Lys-389. The active-site Proton acceptor is the Lys-338.

Belongs to the enolase family. The cofactor is Mg(2+).

The protein localises to the cytoplasm. The protein resides in the secreted. It localises to the cell surface. The catalysed reaction is (2R)-2-phosphoglycerate = phosphoenolpyruvate + H2O. It functions in the pathway carbohydrate degradation; glycolysis; pyruvate from D-glyceraldehyde 3-phosphate: step 4/5. Catalyzes the reversible conversion of 2-phosphoglycerate (2-PG) into phosphoenolpyruvate (PEP). It is essential for the degradation of carbohydrates via glycolysis. The polypeptide is Enolase (Thermoanaerobacter sp. (strain X514)).